The chain runs to 439 residues: Glutamate--tRNA ligase 2 (439 aa).

A 'HIGH' region motif is present at residues 6–16 (PSPTGDMHIGN). The 'KMSKS' region motif lies at 232-236 (KMSKR). Lysine 235 lines the ATP pocket.

It belongs to the class-I aminoacyl-tRNA synthetase family. Glutamate--tRNA ligase type 1 subfamily. In terms of assembly, monomer.

It localises to the cytoplasm. The enzyme catalyses tRNA(Glu) + L-glutamate + ATP = L-glutamyl-tRNA(Glu) + AMP + diphosphate. Catalyzes the attachment of glutamate to tRNA(Glu) in a two-step reaction: glutamate is first activated by ATP to form Glu-AMP and then transferred to the acceptor end of tRNA(Glu). The sequence is that of Glutamate--tRNA ligase 2 from Helicobacter pylori (strain HPAG1).